Here is a 146-residue protein sequence, read N- to C-terminus: Ribonuclease P protein component (146 aa).

The protein belongs to the RnpA family. As to quaternary structure, consists of a catalytic RNA component (M1 or rnpB) and a protein subunit.

It catalyses the reaction Endonucleolytic cleavage of RNA, removing 5'-extranucleotides from tRNA precursor.. In terms of biological role, RNaseP catalyzes the removal of the 5'-leader sequence from pre-tRNA to produce the mature 5'-terminus. It can also cleave other RNA substrates such as 4.5S RNA. The protein component plays an auxiliary but essential role in vivo by binding to the 5'-leader sequence and broadening the substrate specificity of the ribozyme. This Chlorobium phaeobacteroides (strain DSM 266 / SMG 266 / 2430) protein is Ribonuclease P protein component.